Consider the following 398-residue polypeptide: ATP-dependent (S)-NAD(P)H-hydrate dehydratase 1 (398 aa).

One can recognise a YjeF C-terminal domain in the interval 80-391 (LLRKAFQMIP…GYIGEAFELV (312 aa)). Residues glycine 187 and 240–246 (NHVEFQR) each bind (6S)-NADPHX. ATP-binding positions include 280 to 284 (KGSID) and 300 to 309 (GSPKRCGGQG). Position 310 (aspartate 310) interacts with (6S)-NADPHX.

It belongs to the NnrD/CARKD family. The cofactor is Mg(2+).

Its subcellular location is the cytoplasm. The enzyme catalyses (6S)-NADHX + ATP = ADP + phosphate + NADH + H(+). It carries out the reaction (6S)-NADPHX + ATP = ADP + phosphate + NADPH + H(+). Its function is as follows. Catalyzes the dehydration of the S-form of NAD(P)HX at the expense of ATP, which is converted to ADP. Together with NAD(P)HX epimerase, which catalyzes the epimerization of the S- and R-forms, the enzyme allows the repair of both epimers of NAD(P)HX, a damaged form of NAD(P)H that is a result of enzymatic or heat-dependent hydration. This is ATP-dependent (S)-NAD(P)H-hydrate dehydratase 1 from Puccinia graminis f. sp. tritici (strain CRL 75-36-700-3 / race SCCL) (Black stem rust fungus).